The sequence spans 468 residues: UDP-N-acetylmuramate--L-alanine ligase (468 aa).

ATP is bound at residue Gly-112–Thr-118.

Belongs to the MurCDEF family.

It localises to the cytoplasm. The enzyme catalyses UDP-N-acetyl-alpha-D-muramate + L-alanine + ATP = UDP-N-acetyl-alpha-D-muramoyl-L-alanine + ADP + phosphate + H(+). It functions in the pathway cell wall biogenesis; peptidoglycan biosynthesis. In terms of biological role, cell wall formation. This chain is UDP-N-acetylmuramate--L-alanine ligase, found in Bordetella pertussis (strain Tohama I / ATCC BAA-589 / NCTC 13251).